A 536-amino-acid polypeptide reads, in one-letter code: Xylulose kinase (536 aa).

Positions 99, 170, 280, and 281 each coordinate substrate. Residues W355, 441 to 442 (GA), and N445 contribute to the ATP site.

The protein belongs to the FGGY kinase family. Monomer.

It carries out the reaction D-xylulose + ATP = D-xylulose 5-phosphate + ADP + H(+). Its function is as follows. Phosphorylates D-xylulose to produce D-xylulose 5-phosphate, a molecule that may play an important role in the regulation of glucose metabolism and lipogenesis. In Homo sapiens (Human), this protein is Xylulose kinase (XYLB).